The sequence spans 35 residues: Surfactant protein C (35 aa).

2 S-palmitoyl cysteine lipidation sites follow: Cys5 and Cys6.

The protein localises to the secreted. It localises to the extracellular space. Its subcellular location is the surface film. Its function is as follows. Pulmonary surfactant associated proteins promote alveolar stability by lowering the surface tension at the air-liquid interface in the peripheral air spaces. This is Surfactant protein C (SFTPC) from Sus scrofa (Pig).